Reading from the N-terminus, the 203-residue chain is Imidazoleglycerol-phosphate dehydratase (203 aa).

This sequence belongs to the imidazoleglycerol-phosphate dehydratase family.

It is found in the cytoplasm. It catalyses the reaction D-erythro-1-(imidazol-4-yl)glycerol 3-phosphate = 3-(imidazol-4-yl)-2-oxopropyl phosphate + H2O. It participates in amino-acid biosynthesis; L-histidine biosynthesis; L-histidine from 5-phospho-alpha-D-ribose 1-diphosphate: step 6/9. This chain is Imidazoleglycerol-phosphate dehydratase, found in Helicobacter hepaticus (strain ATCC 51449 / 3B1).